A 69-amino-acid polypeptide reads, in one-letter code: Alpha-conotoxin-like Tx1 (69 aa).

An N-terminal signal peptide occupies residues 1-21 (MGMRMMFVVFLLVVLASTVVS). The propeptide occupies 22–49 (STSGRRAFHGRNAAAKASGLVSLTDRRP). 2 cysteine pairs are disulfide-bonded: cysteine 51–cysteine 57 and cysteine 52–cysteine 65. A ser-Xaa-Pro motif, crucial for potent interaction with nAChR region spans residues 53–55 (SDP). Glycine 66 bears the Glycine amide mark.

The protein belongs to the conotoxin A superfamily. As to expression, expressed by the venom duct.

The protein resides in the secreted. Alpha-conotoxins act on postsynaptic membranes, they bind to the nicotinic acetylcholine receptors (nAChR) and thus inhibit them. This Conus textile (Cloth-of-gold cone) protein is Alpha-conotoxin-like Tx1.